We begin with the raw amino-acid sequence, 240 residues long: Phosducin-like protein 3 (240 aa).

Met1 carries the N-acetylmethionine modification. The Phosducin domain occupies 27–181; that stretch reads KELEEEEAEK…EGDIKAQFIG (155 aa). Phosphoserine is present on residues Ser44, Ser65, Ser235, and Ser237. A thioredoxin fold region spans residues 92–240; that stretch reads FGEVLEISGK…MRRDSDSEDD (149 aa).

This sequence belongs to the phosducin family. In terms of assembly, interacts (via thioredoxin fold region) with KDR/VEGFR2 (via juxtamembrane domain). Forms ternary complexes with the chaperonin CCT complex and actin substrate, leading to inhibition of actin folding. Interacts with XIAP (via BIR 3 and RING domain). Interacts with HSP90AA1 and HSP90AB1. Post-translationally, N-terminal methionine acetylation destabilizes the protein. In terms of tissue distribution, expressed in blood vessels (at protein level).

It localises to the cytoplasm. Its subcellular location is the perinuclear region. The protein resides in the endoplasmic reticulum. Acts as a chaperone for the angiogenic VEGF receptor KDR/VEGFR2, increasing its abundance by inhibiting its ubiquitination and degradation. Inhibits the folding activity of the chaperonin-containing T-complex (CCT) which leads to inhibition of cytoskeletal actin folding. Acts as a chaperone during heat shock alongside HSP90 and HSP40/70 chaperone complexes. Modulates the activation of caspases during apoptosis. This is Phosducin-like protein 3 (Pdcl3) from Mus musculus (Mouse).